A 152-amino-acid chain; its full sequence is Deoxyuridine 5'-triphosphate nucleotidohydrolase (152 aa).

Residues 72 to 74 (RSG), N85, and 89 to 91 (TID) contribute to the substrate site.

The protein belongs to the dUTPase family. Requires Mg(2+) as cofactor.

It catalyses the reaction dUTP + H2O = dUMP + diphosphate + H(+). It participates in pyrimidine metabolism; dUMP biosynthesis; dUMP from dCTP (dUTP route): step 2/2. Its function is as follows. This enzyme is involved in nucleotide metabolism: it produces dUMP, the immediate precursor of thymidine nucleotides and it decreases the intracellular concentration of dUTP so that uracil cannot be incorporated into DNA. This is Deoxyuridine 5'-triphosphate nucleotidohydrolase from Bradyrhizobium sp. (strain ORS 278).